A 302-amino-acid polypeptide reads, in one-letter code: Large ribosomal subunit protein bL28m (302 aa).

The protein belongs to the bacterial ribosomal protein bL28 family. As to quaternary structure, component of the mitochondrial ribosome large subunit (39S) which comprises a 16S rRNA and about 50 distinct proteins.

Its subcellular location is the mitochondrion. In Drosophila melanogaster (Fruit fly), this protein is Large ribosomal subunit protein bL28m (mRpL28).